A 210-amino-acid chain; its full sequence is Large ribosomal subunit protein bL25 (210 aa).

Positions 1-23 (MSDIGTLSAKGRDRAGKGAARAT) are disordered.

Belongs to the bacterial ribosomal protein bL25 family. CTC subfamily. In terms of assembly, part of the 50S ribosomal subunit; part of the 5S rRNA/L5/L18/L25 subcomplex. Contacts the 5S rRNA. Binds to the 5S rRNA independently of L5 and L18.

Functionally, this is one of the proteins that binds to the 5S RNA in the ribosome where it forms part of the central protuberance. The protein is Large ribosomal subunit protein bL25 of Rhodospirillum rubrum (strain ATCC 11170 / ATH 1.1.1 / DSM 467 / LMG 4362 / NCIMB 8255 / S1).